Reading from the N-terminus, the 1183-residue chain is DNA-directed RNA polymerase subunit beta (1183 aa).

The protein belongs to the RNA polymerase beta chain family. As to quaternary structure, the RNAP catalytic core consists of 2 alpha, 1 beta, 1 beta' and 1 omega subunit. When a sigma factor is associated with the core the holoenzyme is formed, which can initiate transcription.

It catalyses the reaction RNA(n) + a ribonucleoside 5'-triphosphate = RNA(n+1) + diphosphate. DNA-dependent RNA polymerase catalyzes the transcription of DNA into RNA using the four ribonucleoside triphosphates as substrates. This chain is DNA-directed RNA polymerase subunit beta, found in Staphylococcus aureus (strain Mu3 / ATCC 700698).